We begin with the raw amino-acid sequence, 84 residues long: Large ribosomal subunit protein bL27 (84 aa).

A disordered region spans residues 1–22 (MAHKKAGGSTRNGRDSESKRLG).

Belongs to the bacterial ribosomal protein bL27 family.

This Shewanella frigidimarina (strain NCIMB 400) protein is Large ribosomal subunit protein bL27.